A 197-amino-acid polypeptide reads, in one-letter code: Thymidine kinase (197 aa).

Residues 9–16 (AAMNAGKS) and 83–86 (DESQ) each bind ATP. Glutamate 84 acts as the Proton acceptor in catalysis. Positions 141, 143, 178, and 181 each coordinate Zn(2+).

The protein belongs to the thymidine kinase family. In terms of assembly, homotetramer.

It localises to the cytoplasm. It catalyses the reaction thymidine + ATP = dTMP + ADP + H(+). The chain is Thymidine kinase from Albidiferax ferrireducens (strain ATCC BAA-621 / DSM 15236 / T118) (Rhodoferax ferrireducens).